A 389-amino-acid polypeptide reads, in one-letter code: ELAV-like protein 2 (389 aa).

RRM domains are found at residues 66–145 (TNLI…YARP), 153–233 (ANLY…FANN), and 306–384 (WCIF…FKTS).

It belongs to the RRM elav family. As to quaternary structure, part of a ribonucleoprotein (RNP) complex, at least composed of elavl1/elrA and/or elavl2/elrB, igf2bp3/vg1RBP, ddx6/Xp54, ybx2/frgy2, lsm14b/rap55b and, in a subset of RNP complexes, stau1/staufen. Binds RNA as a homooligomer. As to expression, expressed in brain, testis and ovary. Ovarian expression is restricted to follicle cells surrounding the oocyte. From the early tailbud stage, expression is neural-specific and is seen in both the central and peripheral nervous system in differentiating neurons but not proliferating precursors. Expressed in the retina from stage 32 with expression becoming restricted to the ganglion cell layer by later stages.

The protein resides in the cytoplasm. It localises to the cell cortex. In terms of biological role, binds to poly-U elements and AU-rich elements (AREs) in the 3'-UTR of target mRNAs. Required for the vegetal localization of vg1 mRNA. Probably required for nervous system development. The polypeptide is ELAV-like protein 2 (elavl2) (Xenopus laevis (African clawed frog)).